The sequence spans 383 residues: 8-amino-7-oxononanoate synthase (383 aa).

Arg-21 contributes to the substrate binding site. A pyridoxal 5'-phosphate-binding site is contributed by 108–109; that stretch reads GY. His-133 serves as a coordination point for substrate. 3 residues coordinate pyridoxal 5'-phosphate: Ser-179, His-207, and Thr-233. At Lys-236 the chain carries N6-(pyridoxal phosphate)lysine. Residue Thr-350 coordinates substrate.

This sequence belongs to the class-II pyridoxal-phosphate-dependent aminotransferase family. BioF subfamily. As to quaternary structure, homodimer. Requires pyridoxal 5'-phosphate as cofactor.

It carries out the reaction 6-carboxyhexanoyl-[ACP] + L-alanine + H(+) = (8S)-8-amino-7-oxononanoate + holo-[ACP] + CO2. Its pathway is cofactor biosynthesis; biotin biosynthesis. In terms of biological role, catalyzes the decarboxylative condensation of pimeloyl-[acyl-carrier protein] and L-alanine to produce 8-amino-7-oxononanoate (AON), [acyl-carrier protein], and carbon dioxide. The protein is 8-amino-7-oxononanoate synthase of Serratia proteamaculans (strain 568).